The chain runs to 702 residues: MKKRNKGLVEQTTTEKNNFSRKTAWKVFWWVIILAVVIGVLAYIFSPRAATAVVESWKLNGGSNSTLTAKVSGFSNELTFKQINGSTYVTDTILQVSITFDGLNSPLTVTAHKTVNSNGNVIFNIANLSINQSNGQITVNSNGTMMNGGSSNNTKSIAGFETLGTFIAPDTRARDVLNGLFGLLPIIIFVVFFLLFWRSARGISAGGREEDNIFSIGKTQAKLAKSTVKFTNIAGLQEEKHELLEIVDYLKNPLKYAQMGARSPRGVILYGPPGTGKTLLAKAVAGEAGVPFFQSTGSGFEDMLVGVGAKRVRDLFNKAKKAAPCIIFIDEIDSVGSKRGRVELSSYSVVEQTLNQLLAEMDGFTSRTGVVVMAATNRLDVLDDALLRPGRFDRHIQINLPDIKEREGILKVHAENKNLSSKISLLDVAKRTPGFSGAQLENVINEATLLAVRDNRTTININDIDEAIDRVIAGPAKKSRVISDEDRKLVAYHEAGHALVGLHVHSNDEVQKITIIPRGQAGGYTLSTPKSGDLNLKRKSDLLAMIATAMGGRAAEEEIYGNLEITTGASSDFYKATNIARAMVTQLGMSKLGQVQYVPSQGTLPSNVKLYSEQTAKDIDNEINFIIEEQYKKAKTIIKSNRKELELLVEALLIAETILKSDIDFIHKNTKLPPEILLQKQEQQAKQKLNKSEVKPESETNS.

Residues 1–26 are Cytoplasmic-facing; sequence MKKRNKGLVEQTTTEKNNFSRKTAWK. Residues 27-47 traverse the membrane as a helical segment; it reads VFWWVIILAVVIGVLAYIFSP. At 48–175 the chain is on the extracellular side; the sequence is RAATAVVESW…FIAPDTRARD (128 aa). Residues 176–196 form a helical membrane-spanning segment; that stretch reads VLNGLFGLLPIIIFVVFFLLF. The Cytoplasmic segment spans residues 197 to 702; it reads WRSARGISAG…EVKPESETNS (506 aa). Residue 271-278 participates in ATP binding; that stretch reads GPPGTGKT. A Zn(2+)-binding site is contributed by H493. E494 is an active-site residue. 2 residues coordinate Zn(2+): H497 and D572. A disordered region spans residues 682-702; that stretch reads EQQAKQKLNKSEVKPESETNS. The span at 690-702 shows a compositional bias: basic and acidic residues; that stretch reads NKSEVKPESETNS.

In the central section; belongs to the AAA ATPase family. This sequence in the C-terminal section; belongs to the peptidase M41 family. In terms of assembly, homohexamer. It depends on Zn(2+) as a cofactor.

The protein localises to the cell membrane. Acts as a processive, ATP-dependent zinc metallopeptidase for both cytoplasmic and membrane proteins. Plays a role in the quality control of integral membrane proteins. The polypeptide is ATP-dependent zinc metalloprotease FtsH (Mycoplasma genitalium (strain ATCC 33530 / DSM 19775 / NCTC 10195 / G37) (Mycoplasmoides genitalium)).